Here is a 143-residue protein sequence, read N- to C-terminus: Nucleoside diphosphate kinase (143 aa).

Residues lysine 11, phenylalanine 59, arginine 87, threonine 93, arginine 104, and asparagine 114 each contribute to the ATP site. The active-site Pros-phosphohistidine intermediate is histidine 117.

This sequence belongs to the NDK family. In terms of assembly, homotetramer. Requires Mg(2+) as cofactor.

Its subcellular location is the cytoplasm. It catalyses the reaction a 2'-deoxyribonucleoside 5'-diphosphate + ATP = a 2'-deoxyribonucleoside 5'-triphosphate + ADP. The enzyme catalyses a ribonucleoside 5'-diphosphate + ATP = a ribonucleoside 5'-triphosphate + ADP. Its function is as follows. Major role in the synthesis of nucleoside triphosphates other than ATP. The ATP gamma phosphate is transferred to the NDP beta phosphate via a ping-pong mechanism, using a phosphorylated active-site intermediate. The sequence is that of Nucleoside diphosphate kinase from Shewanella sp. (strain ANA-3).